The primary structure comprises 643 residues: MSALRPPLIGSRSRNMNLKFRHKILLSACGVVVLAFALFTLYNDYLQRNTIRQNIEASVQQSGALTASSVQNWMSGRILVLENLAQDIGQQGAGDTLAGLIEQPSYTRNFLFTYLGQANGEFTQRPDAQMPAGYDPRQRPWYGAAANAGQTVLTAPYQGAVGGLMVTIATPVKSKRNGELIGVVGGDVTLDTLVEIINSVDFGGIGHAFLADANGQVIVSPNKDQVMKNLKDIYPGSNLRVAAGMQDVTLDGQDRIISFAPVAGLPSAQWYIGLSIDRDKAYAALSQFRTSAIIAMLIAVAAIAGLLGLLIPVLMSPLTTMGRAMRDIAEGEGDLTRRLAVQNKDEFGELATSFNRFVERIHASISEVSSATRLVHDLSEKVVSASNASIIGSEEQSMRTNSVAAAINELGAATQEIARNAADASQHASGASEQAHGGREVVEEAISAMTALSQRISESCAQIETLNASTDEIGKILDVIKGISQQTNLLALNAAIEAARAGEAGRGFAVVADEVRNLAHRTQESAEEIHRMITSLQVGSREAVHTMNTSQVSSEQTVQVANQAGERLASVTQRIGEIDGMNQSVATATEEQTAVVESLNLDITQINALNQQGVENLNETLRHCDQLAQQAGRLKQLVGSFRI.

A helical membrane pass occupies residues Ile24 to Asp44. In terms of domain architecture, Cache spans Asn49–Gly273. Residues Ile293–Val313 form a helical membrane-spanning segment. The region spanning Pro312–Ser366 is the HAMP domain. The Methyl-accepting transducer domain occupies Ala371–Asn607.

This sequence belongs to the methyl-accepting chemotaxis (MCP) protein family.

It localises to the cell membrane. Functionally, chemotactic-signal transducers respond to changes in the concentration of attractants and repellents in the environment, transduce a signal from the outside to the inside of the cell, and facilitate sensory adaptation through the variation of the level of methylation. McpA is a chemoreceptor that binds to 12 different L-amino acids and mediates chemotaxis toward these amino acids. This chain is Methyl-accepting chemotaxis protein McpA, found in Pseudomonas putida (strain ATCC 47054 / DSM 6125 / CFBP 8728 / NCIMB 11950 / KT2440).